The sequence spans 170 residues: 3-hydroxydecanoyl-[acyl-carrier-protein] dehydratase (170 aa).

The active site involves His71.

Belongs to the thioester dehydratase family. FabA subfamily. Homodimer.

It is found in the cytoplasm. It carries out the reaction a (3R)-hydroxyacyl-[ACP] = a (2E)-enoyl-[ACP] + H2O. It catalyses the reaction (3R)-hydroxydecanoyl-[ACP] = (2E)-decenoyl-[ACP] + H2O. The catalysed reaction is (2E)-decenoyl-[ACP] = (3Z)-decenoyl-[ACP]. It functions in the pathway lipid metabolism; fatty acid biosynthesis. Its function is as follows. Necessary for the introduction of cis unsaturation into fatty acids. Catalyzes the dehydration of (3R)-3-hydroxydecanoyl-ACP to E-(2)-decenoyl-ACP and then its isomerization to Z-(3)-decenoyl-ACP. Can catalyze the dehydratase reaction for beta-hydroxyacyl-ACPs with saturated chain lengths up to 16:0, being most active on intermediate chain length. The polypeptide is 3-hydroxydecanoyl-[acyl-carrier-protein] dehydratase (Chelativorans sp. (strain BNC1)).